A 202-amino-acid polypeptide reads, in one-letter code: Probable septum site-determining protein MinC (202 aa).

This sequence belongs to the MinC family. As to quaternary structure, interacts with MinD and FtsZ.

Its function is as follows. Cell division inhibitor that blocks the formation of polar Z ring septums. Rapidly oscillates between the poles of the cell to destabilize FtsZ filaments that have formed before they mature into polar Z rings. Prevents FtsZ polymerization. In Dictyoglomus turgidum (strain DSM 6724 / Z-1310), this protein is Probable septum site-determining protein MinC.